We begin with the raw amino-acid sequence, 151 residues long: Globin (151 aa).

Residues 2–151 form the Globin domain; it reads SLSDADKKAL…AAFNETLKKA (150 aa). Histidine 100 is a binding site for heme b.

Belongs to the globin family.

This Biomphalaria glabrata (Bloodfluke planorb) protein is Globin.